We begin with the raw amino-acid sequence, 182 residues long: Meiotically up-regulated gene 82 protein (182 aa).

Positions 161 to 182 are disordered; that stretch reads EKRLSEKKYKQKKKTQRRITMD. Residues 169-182 are compositionally biased toward basic residues; it reads YKQKKKTQRRITMD.

It belongs to the prokaryotic/mitochondrial release factor family.

The protein localises to the mitochondrion. Its function is as follows. Has a role in meiosis. The chain is Meiotically up-regulated gene 82 protein (mug82) from Schizosaccharomyces pombe (strain 972 / ATCC 24843) (Fission yeast).